Here is a 295-residue protein sequence, read N- to C-terminus: Bifunctional protein FolD (295 aa).

Residues G169 to G171, T196, and V237 each bind NADP(+).

It belongs to the tetrahydrofolate dehydrogenase/cyclohydrolase family. As to quaternary structure, homodimer.

The catalysed reaction is (6R)-5,10-methylene-5,6,7,8-tetrahydrofolate + NADP(+) = (6R)-5,10-methenyltetrahydrofolate + NADPH. It carries out the reaction (6R)-5,10-methenyltetrahydrofolate + H2O = (6R)-10-formyltetrahydrofolate + H(+). Its pathway is one-carbon metabolism; tetrahydrofolate interconversion. In terms of biological role, catalyzes the oxidation of 5,10-methylenetetrahydrofolate to 5,10-methenyltetrahydrofolate and then the hydrolysis of 5,10-methenyltetrahydrofolate to 10-formyltetrahydrofolate. This is Bifunctional protein FolD from Kineococcus radiotolerans (strain ATCC BAA-149 / DSM 14245 / SRS30216).